Reading from the N-terminus, the 344-residue chain is Protein L-Myc-1-B (344 aa).

Polar residues-rich tracts occupy residues 104 to 113 and 213 to 223; these read GSPRVTNTQK and NTMSPQHNFHS. Disordered regions lie at residues 104–162 and 208–271; these read GSPR…EDEI and LPPE…YLER. Basic and acidic residues predominate over residues 259–270; it reads DLAKRKNHNYLE. Positions 261–313 constitute a bHLH domain; that stretch reads AKRKNHNYLERKRRNDLRSRFLALREEVPSLSRSTKTPKVVVLSKATEFLKGL. The tract at residues 313–341 is leucine-zipper; that stretch reads LVIQEQQLTAEKLKLWSRHQQLLRRISQL.

In terms of assembly, efficient DNA binding requires dimerization with another bHLH protein. Binds DNA as a heterodimer with MAX. As to expression, high levels in oocytes, modest levels in kidney and low levels in spleen.

It is found in the nucleus. The chain is Protein L-Myc-1-B (mycl1-b) from Xenopus laevis (African clawed frog).